Consider the following 448-residue polypeptide: Tryptophan dimethylallyltransferase 1 (448 aa).

Residues 80 to 81 (IL) and Glu89 contribute to the L-tryptophan site. Residues Arg100, Lys186, and Tyr188 each contribute to the substrate site. 2 residues coordinate L-tryptophan: Tyr190 and Arg249. Substrate-binding residues include Arg262, Lys264, Tyr266, Gln348, Tyr350, Tyr414, and Tyr418.

This sequence belongs to the tryptophan dimethylallyltransferase family. In terms of assembly, homodimer.

The enzyme catalyses L-tryptophan + dimethylallyl diphosphate = 4-(3-methylbut-2-enyl)-L-tryptophan + diphosphate. Its pathway is alkaloid biosynthesis; ergot alkaloid biosynthesis. In terms of biological role, tryptophan dimethylallyltransferase; part of the gene cluster that mediates the biosynthesis of fungal ergot alkaloid. DmaW catalyzes the first step of ergot alkaloid biosynthesis by condensing dimethylallyl diphosphate (DMAP) and tryptophan to form 4-dimethylallyl-L-tryptophan. The second step is catalyzed by the methyltransferase easF that methylates 4-dimethylallyl-L-tryptophan in the presence of S-adenosyl-L-methionine, resulting in the formation of 4-dimethylallyl-L-abrine. The catalase easC and the FAD-dependent oxidoreductase easE then transform 4-dimethylallyl-L-abrine to chanoclavine-I which is further oxidized by easD in the presence of NAD(+), resulting in the formation of chanoclavine-I aldehyde. Agroclavine dehydrogenase easG then mediates the conversion of chanoclavine-I aldehyde to agroclavine via a non-enzymatic adduct reaction: the substrate is an iminium intermediate that is formed spontaneously from chanoclavine-I aldehyde in the presence of glutathione. The presence of easA is not required to complete this reaction. Further conversion of agroclavine to paspalic acid is a two-step process involving oxidation of agroclavine to elymoclavine and of elymoclavine to paspalic acid, the second step being performed by the elymoclavine oxidase cloA. Paspalic acid is then further converted to D-lysergic acid. Ergopeptines are assembled from D-lysergic acid and three different amino acids by the D-lysergyl-peptide-synthetases composed each of a monomudular and a trimodular nonribosomal peptide synthetase subunit. LpsB and lpsC encode the monomodular subunits responsible for D-lysergic acid activation and incorporation into the ergopeptine backbone. LpsA1 and A2 subunits encode the trimodular nonribosomal peptide synthetase assembling the tripeptide portion of ergopeptines. LpsA1 is responsible for formation of the major ergopeptine, ergotamine, and lpsA2 for alpha-ergocryptine, the minor ergopeptine of the total alkaloid mixture elaborated by C.purpurea. D-lysergyl-tripeptides are assembled by the nonribosomal peptide synthetases and released as N-(D-lysergyl-aminoacyl)-lactams. Cyclolization of the D-lysergyl-tripeptides is performed by the Fe(2+)/2-ketoglutarate-dependent dioxygenase easH which introduces a hydroxyl group into N-(D-lysergyl-aminoacyl)-lactam at alpha-C of the aminoacyl residue followed by spontaneous condensation with the terminal lactam carbonyl group. The sequence is that of Tryptophan dimethylallyltransferase 1 from Claviceps purpurea (strain 20.1) (Ergot fungus).